We begin with the raw amino-acid sequence, 669 residues long: MKSSLAVLSTARSDTTTTYIGRNQMIAPMAFQAKRSTFLCPLLVALAILFSLTAVSSGTSWAKDHAGSSQATVSAVAGDNQAVTAKGEVKNSFAPIKTCFNFLKEQPFVFILLALAIGYPLGKISLWGISLGPTAGTLLVGVLISIIGQNIFGIIYGIPSIVSTIFLLMFMYALGLKVGPQFFSGLKTGGLAFIVIGLIVWSLNWLICFFGVKLAGLEAGFAPGIISGSYTITAIIGVAQTALTNGAYTPPPGVSTEQIGANIAAGYAISYVLSNIGIILLIRYLPQIFGHDPIADAQLAEKELSGGATDPVPGAAGSLSLGFSHFDLRAYEVDHQEIIGKTVQEFFHLYPEAPILRVVRQGKLLNLSENNPIKRGDIVSVRADVHELIADGKKLIGKESDSILARDVPIEVADIHIGSRDVAGDTLAELGRSIGFGLQLKALFRFGQELPLLAGTAVQVGDVLRFVGPDFCIQQAAKRLGGRPILNSSITEVMYMAIAMGIGYIFGSLSFNFAGIPFALGTSAGCLLAGIFMSYWRSRNPEFGGPMSEGARSFLQDIGLNLFVAVLAAAVGPKIIESFHGTTAIWVAIIGILGALVPPLVAFVVGIKVFKLNSVVAAGASTGARNSTPGLNAICEQSQSAVAAVPYPLTYALTTVLALVGGYFAMLLS.

6 helical membrane passes run 39–61, 124–146, 153–175, 190–212, 221–243, and 263–285; these read LCPL…GTSW, ISLW…LISI, GIIY…YALG, GLAF…FFGV, FAPG…QTAL, and IAAG…IRYL. 2 RCK C-terminal domains span residues 316–397 and 398–483; these read AGSL…KLIG and KESD…LGGR. 5 consecutive transmembrane segments (helical) span residues 484-506, 516-538, 558-580, 585-607, and 645-667; these read PILN…GYIF, IPFA…YWRS, IGLN…ESFH, IWVA…VVGI, and VPYP…FAML.

This sequence belongs to the AAE transporter (TC 2.A.81) family.

The protein localises to the cell membrane. This is an uncharacterized protein from Desulfotalea psychrophila (strain LSv54 / DSM 12343).